The primary structure comprises 159 residues: NADH-quinone oxidoreductase subunit B (159 aa).

4 residues coordinate [4Fe-4S] cluster: cysteine 36, cysteine 37, cysteine 102, and cysteine 132.

Belongs to the complex I 20 kDa subunit family. As to quaternary structure, NDH-1 is composed of 14 different subunits. Subunits NuoB, C, D, E, F, and G constitute the peripheral sector of the complex. It depends on [4Fe-4S] cluster as a cofactor.

The protein localises to the cell inner membrane. The enzyme catalyses a quinone + NADH + 5 H(+)(in) = a quinol + NAD(+) + 4 H(+)(out). Its function is as follows. NDH-1 shuttles electrons from NADH, via FMN and iron-sulfur (Fe-S) centers, to quinones in the respiratory chain. Couples the redox reaction to proton translocation (for every two electrons transferred, four hydrogen ions are translocated across the cytoplasmic membrane), and thus conserves the redox energy in a proton gradient. This Delftia acidovorans (strain DSM 14801 / SPH-1) protein is NADH-quinone oxidoreductase subunit B.